A 173-amino-acid chain; its full sequence is Myosin light chain 5 (173 aa).

Residues 1-22 (MASRKTKKKEGGGLRAQRASSN) are disordered. EF-hand domains are found at residues 30-65 (TQIQEFKEAFTLMDQNRDGFIDKEDLKDTYASLGKT), 100-135 (DAEETILNAFKMLDPEGKGSINKDYIKRLLMSQADK), and 136-171 (MTAEEVDQMFQFATIDAAGNLDYKALSYVLTHGEEK). Ca(2+)-binding residues include aspartate 43, asparagine 45, aspartate 47, and aspartate 54.

In terms of assembly, myosin is a hexamer of 2 heavy chains and 4 light chains. As to expression, jaw-closing muscles.

In Felis catus (Cat), this protein is Myosin light chain 5 (MYL5).